The chain runs to 217 residues: Methylthioribulose-1-phosphate dehydratase (217 aa).

Zn(2+) is bound by residues His106 and His108.

Belongs to the aldolase class II family. MtnB subfamily. Requires Zn(2+) as cofactor.

It carries out the reaction 5-(methylsulfanyl)-D-ribulose 1-phosphate = 5-methylsulfanyl-2,3-dioxopentyl phosphate + H2O. It functions in the pathway amino-acid biosynthesis; L-methionine biosynthesis via salvage pathway; L-methionine from S-methyl-5-thio-alpha-D-ribose 1-phosphate: step 2/6. Its function is as follows. Catalyzes the dehydration of methylthioribulose-1-phosphate (MTRu-1-P) into 2,3-diketo-5-methylthiopentyl-1-phosphate (DK-MTP-1-P). The protein is Methylthioribulose-1-phosphate dehydratase of Xanthomonas campestris pv. campestris (strain B100).